Reading from the N-terminus, the 67-residue chain is Probable Sec-independent protein translocase protein TatE (67 aa).

A helical transmembrane segment spans residues 1 to 21 (MEGISIAKLLIIGALIVLLFG). The segment at 46 to 67 (EDTSATRTTAEDVPAERVVHKD) is disordered.

This sequence belongs to the TatA/E family. TatE subfamily.

Its subcellular location is the cell inner membrane. In terms of biological role, part of the twin-arginine translocation (Tat) system that transports large folded proteins containing a characteristic twin-arginine motif in their signal peptide across membranes. TatE shares overlapping functions with TatA. This Pantoea vagans (strain C9-1) (Pantoea agglomerans (strain C9-1)) protein is Probable Sec-independent protein translocase protein TatE.